The following is a 251-amino-acid chain: tRNA-cytidine(32) 2-sulfurtransferase 1 (251 aa).

A PP-loop motif motif is present at residues 33–38 (SGGKDS). Residues cysteine 108, cysteine 111, and cysteine 199 each contribute to the [4Fe-4S] cluster site.

Belongs to the TtcA family. As to quaternary structure, homodimer. The cofactor is Mg(2+). It depends on [4Fe-4S] cluster as a cofactor.

The protein localises to the cytoplasm. The catalysed reaction is cytidine(32) in tRNA + S-sulfanyl-L-cysteinyl-[cysteine desulfurase] + AH2 + ATP = 2-thiocytidine(32) in tRNA + L-cysteinyl-[cysteine desulfurase] + A + AMP + diphosphate + H(+). Its pathway is tRNA modification. In terms of biological role, catalyzes the ATP-dependent 2-thiolation of cytidine in position 32 of tRNA, to form 2-thiocytidine (s(2)C32). The sulfur atoms are provided by the cysteine/cysteine desulfurase (IscS) system. This Francisella tularensis subsp. holarctica (strain FTNF002-00 / FTA) protein is tRNA-cytidine(32) 2-sulfurtransferase 1.